Consider the following 864-residue polypeptide: Mitochondrial 15S rRNA processing factor CCM1 (864 aa).

The transit peptide at 1-76 directs the protein to the mitochondrion; the sequence is MYMARCGPKN…REFSNTLKER (76 aa). 2 PPR repeats span residues 319–353 and 356–390; these read NKQN…STKH and DICT…NIKP.

This sequence belongs to the CCM1 family. In terms of assembly, binds to mitochondrial small subunit 15S rRNA.

The protein localises to the mitochondrion. Regulates mitochondrial small subunit maturation by controlling 15S rRNA 5'-end processing. Localizes to the 5' precursor of the 15S rRNA in a position that is subsequently occupied by mS47 in the mature yeast mtSSU. Uses structure and sequence-specific RNA recognition, binding to a single-stranded region of the precursor and specifically recognizing bases -6 to -1. The exchange of Ccm1 for mS47 is coupled to the irreversible removal of precursor rRNA that is accompanied by conformational changes of the mitoribosomal proteins uS5m and mS26. These conformational changes signal completion of 5'-end rRNA processing through protection of the mature 5'-end of the 15S rRNA and stabilization of mS47. The removal of the 5' precursor together with the dissociation of Ccm1 may be catalyzed by the 5'-3' exoribonuclease Pet127. Involved in the specific removal of group I introns in mitochondrial encoded transcripts. This is Mitochondrial 15S rRNA processing factor CCM1 (CCM1) from Saccharomyces cerevisiae (strain RM11-1a) (Baker's yeast).